We begin with the raw amino-acid sequence, 157 residues long: Nicotinate dehydrogenase small FeS subunit (157 aa).

The 2Fe-2S ferredoxin-type domain occupies 4 to 80 (ITINLNLNGE…ESTIITLEGV (77 aa)). Residues cysteine 42, cysteine 47, cysteine 50, cysteine 62, cysteine 101, cysteine 104, cysteine 136, and cysteine 138 each contribute to the [2Fe-2S] cluster site.

Heterooctamer of NDHM, NDHL, NDHS and NDHF. Dimer of heterotetramers. [2Fe-2S] cluster serves as cofactor.

The enzyme catalyses nicotinate + NADP(+) + H2O = 6-hydroxynicotinate + NADPH + H(+). It functions in the pathway cofactor degradation; nicotinate degradation; 6-hydroxynicotinate from nicotinate: step 1/1. Its activity is regulated as follows. Reversibly inactivated by selenide and sulfide. Not inhibited by cyanide. Its function is as follows. Catalyzes the hydroxylation of nicotinate to 6-hydroxynicotinate. Also active against 2-pyrazinecarboxylic acid, but inactive against other nicotinate analogs. The sequence is that of Nicotinate dehydrogenase small FeS subunit (ndhS) from Eubacterium barkeri (Clostridium barkeri).